The following is a 124-amino-acid chain: Small ribosomal subunit protein uS12 (124 aa).

The residue at position 89 (aspartate 89) is a 3-methylthioaspartic acid.

The protein belongs to the universal ribosomal protein uS12 family. Part of the 30S ribosomal subunit. Contacts proteins S8 and S17. May interact with IF1 in the 30S initiation complex.

Its function is as follows. With S4 and S5 plays an important role in translational accuracy. Interacts with and stabilizes bases of the 16S rRNA that are involved in tRNA selection in the A site and with the mRNA backbone. Located at the interface of the 30S and 50S subunits, it traverses the body of the 30S subunit contacting proteins on the other side and probably holding the rRNA structure together. The combined cluster of proteins S8, S12 and S17 appears to hold together the shoulder and platform of the 30S subunit. This Shewanella putrefaciens (strain CN-32 / ATCC BAA-453) protein is Small ribosomal subunit protein uS12.